A 229-amino-acid chain; its full sequence is Artemin (229 aa).

Ala-1 is modified (N-acetylalanine). A Ferritin-like diiron domain is found at 25–173; the sequence is HNFDPECEKA…DCLSNLHCIG (149 aa).

This sequence belongs to the ferritin family.

The protein is Artemin of Artemia salina (Brine shrimp).